The chain runs to 178 residues: Protein 105R (178 aa).

Positions 1-18 (MYFLFFFLLFLFPVGVKG) are cleaved as a signal peptide.

This chain is Protein 105R, found in Pantherophis guttatus (Corn snake).